The chain runs to 212 residues: Kynurenine formamidase (212 aa).

Trp-17 serves as a coordination point for substrate. Positions 48, 52, and 54 each coordinate Zn(2+). Residue His-58 is the Proton donor/acceptor of the active site. The Zn(2+) site is built by His-161 and Glu-173.

Belongs to the Cyclase 1 superfamily. KynB family. In terms of assembly, homodimer. Zn(2+) serves as cofactor.

The catalysed reaction is N-formyl-L-kynurenine + H2O = L-kynurenine + formate + H(+). It participates in amino-acid degradation; L-tryptophan degradation via kynurenine pathway; L-kynurenine from L-tryptophan: step 2/2. Its function is as follows. Catalyzes the hydrolysis of N-formyl-L-kynurenine to L-kynurenine, the second step in the kynurenine pathway of tryptophan degradation. In Salinibacter ruber (strain DSM 13855 / M31), this protein is Kynurenine formamidase.